We begin with the raw amino-acid sequence, 464 residues long: Phosphoenolpyruvate carboxylase (464 aa).

This sequence belongs to the PEPCase type 2 family. In terms of assembly, homotetramer. Mg(2+) is required as a cofactor.

It carries out the reaction oxaloacetate + phosphate = phosphoenolpyruvate + hydrogencarbonate. Its function is as follows. Catalyzes the irreversible beta-carboxylation of phosphoenolpyruvate (PEP) to form oxaloacetate (OAA), a four-carbon dicarboxylic acid source for the tricarboxylic acid cycle. This chain is Phosphoenolpyruvate carboxylase, found in Thermofilum pendens (strain DSM 2475 / Hrk 5).